Consider the following 256-residue polypeptide: Phosphoribosylaminoimidazole-succinocarboxamide synthase (256 aa).

This sequence belongs to the SAICAR synthetase family.

The enzyme catalyses 5-amino-1-(5-phospho-D-ribosyl)imidazole-4-carboxylate + L-aspartate + ATP = (2S)-2-[5-amino-1-(5-phospho-beta-D-ribosyl)imidazole-4-carboxamido]succinate + ADP + phosphate + 2 H(+). The protein operates within purine metabolism; IMP biosynthesis via de novo pathway; 5-amino-1-(5-phospho-D-ribosyl)imidazole-4-carboxamide from 5-amino-1-(5-phospho-D-ribosyl)imidazole-4-carboxylate: step 1/2. The sequence is that of Phosphoribosylaminoimidazole-succinocarboxamide synthase from Synechococcus sp. (strain JA-3-3Ab) (Cyanobacteria bacterium Yellowstone A-Prime).